The sequence spans 249 residues: 5'-nucleotidase SurE (249 aa).

The a divalent metal cation site is built by aspartate 8, aspartate 9, serine 39, and asparagine 91.

This sequence belongs to the SurE nucleotidase family. It depends on a divalent metal cation as a cofactor.

The protein resides in the cytoplasm. It catalyses the reaction a ribonucleoside 5'-phosphate + H2O = a ribonucleoside + phosphate. Functionally, nucleotidase that shows phosphatase activity on nucleoside 5'-monophosphates. The sequence is that of 5'-nucleotidase SurE from Pseudomonas syringae pv. syringae (strain B728a).